Reading from the N-terminus, the 169-residue chain is Der GTPase-activating protein YihI (169 aa).

2 disordered regions span residues 1–83 (MNPL…PTKP) and 150–169 (DEEE…LKGN). Over residues 21–30 (NREELNAEGR) the composition is skewed to basic and acidic residues. Residues 31–40 (ARKREKKHRG) are compositionally biased toward basic residues. 2 stretches are compositionally biased toward basic and acidic residues: residues 51-66 (SGDK…DPRL) and 150-161 (DEEEREEEKQDD).

Belongs to the YihI family. Interacts with Der.

Its function is as follows. A GTPase-activating protein (GAP) that modifies Der/EngA GTPase function. May play a role in ribosome biogenesis. In Photorhabdus laumondii subsp. laumondii (strain DSM 15139 / CIP 105565 / TT01) (Photorhabdus luminescens subsp. laumondii), this protein is Der GTPase-activating protein YihI.